We begin with the raw amino-acid sequence, 86 residues long: Omega-theraphotoxin-Hhn1f 2 (86 aa).

Residues 1–21 (MKSIVFVALFGLALLAVVCSA) form the signal peptide. Positions 22 to 50 (SEDAHKELLKEVVRAVVVDKTDAVQAEER) are excised as a propeptide. Cystine bridges form between Cys52/Cys66, Cys59/Cys71, and Cys65/Cys78.

Belongs to the neurotoxin 10 (Hwtx-1) family. 17 (Hntx-9) subfamily. As to expression, expressed by the venom gland.

The protein resides in the secreted. Ion channel inhibitor. This chain is Omega-theraphotoxin-Hhn1f 2, found in Cyriopagopus hainanus (Chinese bird spider).